Consider the following 461-residue polypeptide: Flavin-containing monooxygenase FMO GS-OX4 (461 aa).

Residue 17 to 22 (GAGAAG) coordinates FAD. 211 to 216 (GNFASG) provides a ligand contact to NADP(+).

The protein belongs to the FMO family.

The catalysed reaction is a (Z)-omega-(methylsulfanyl)-N-sulfo-alkylhydroximate S-glucoside + NADPH + O2 + H(+) = a (Z)-omega-(methylsulfinyl)-alkyl-glucosinolate + NADP(+) + H2O. Functionally, catalyzes the conversion of methylthioalkyl glucosinolates of any chain length into methylsulfinylalkyl glucosinolates. The protein is Flavin-containing monooxygenase FMO GS-OX4 (FMOGS-OX4) of Arabidopsis thaliana (Mouse-ear cress).